The chain runs to 511 residues: Peptide transporter YePEPT (511 aa).

Over 1–19 (MQTSTNTPGGRTFFGHPYP) the chain is Cytoplasmic. The chain crosses the membrane as a helical span at residues 20 to 45 (LSGLFLSEMWERFSFYGIRPLLILFM). The Periplasmic segment spans residues 46-59 (AATVFDGGMGLPRE). The helical transmembrane segment at 60–84 (QASAIVGIFAGSMYLAALPGGLLAD) threads the bilayer. Topologically, residues 85-88 (NWLG) are cytoplasmic. The chain crosses the membrane as a helical span at residues 89 to 109 (QQRAVWYGSILIALGHLSIAL). Residues 110-115 (SAFFGN) are Periplasmic-facing. Residues 116–138 (DLFFIGLVFIVLGTGLFKTCISV) traverse the membrane as a helical segment. Topologically, residues 139–149 (MVGTLYKPGDA) are cytoplasmic. A helical transmembrane segment spans residues 150–175 (RRDGGFSLFYMGINMGSFIAPLLSGW). Over 176–181 (LLRTHG) the chain is Periplasmic. The helical transmembrane segment at 182–208 (WHWGFGIGGIGMLVALLIFRGFAIPAM) threads the bilayer. Residues 209 to 232 (KRYDAEVGLDSSWNKPTNQRQGVG) lie on the Cytoplasmic side of the membrane. Residues 233–253 (RWVTAIMAVVVVIIALISQGV) form a helical membrane-spanning segment. Residues 254–256 (IPI) are Periplasmic-facing. The helical transmembrane segment at 257–279 (NPVMIASLLVYVIAASVTLYFIY) threads the bilayer. The Cytoplasmic portion of the chain corresponds to 280 to 294 (LFAFAKMSRKDRARL). The chain crosses the membrane as a helical span at residues 295 to 321 (LVCFILLVSAAFFWSAFEQKPTSFNLF). Topologically, residues 322-335 (ANDYTDRMVMGFEI) are periplasmic. A helical transmembrane segment spans residues 336-357 (PTVWFQSINALFIILLAPVFSW). The Cytoplasmic segment spans residues 358–369 (AWPALAKKKIQP). A helical membrane pass occupies residues 370–396 (SSITKFVIGILCAAAGFAVMMYAAQHV). The Periplasmic portion of the chain corresponds to 397–405 (LSSGGAGVS). The helical transmembrane segment at 406 to 426 (PLWLVMSILLLTLGELCLSPI) threads the bilayer. At 427–441 (GLATMTLLAPDRMRG) the chain is on the cytoplasmic side. Residues 442-462 (QVMGLWFCASSLGNLAAGLIG) traverse the membrane as a helical segment. Topologically, residues 463–471 (GHVKADQLD) are periplasmic. The chain crosses the membrane as a helical span at residues 472 to 496 (MLPTLFARCSIALVICAAVLILLIV). At 497–511 (PIRRLMNNTQGQQTA) the chain is on the cytoplasmic side.

Belongs to the major facilitator superfamily. Proton-dependent oligopeptide transporter (POT/PTR) (TC 2.A.17) family.

The protein resides in the cell inner membrane. Its activity is regulated as follows. Transport is inhibited by the proton ionophore carbonyl cyanide m-chlorophenylhydrazone (CCCP). In terms of biological role, mediates the proton-dependent uptake of dipeptides. Shows higher affinity for dipeptides with a negatively charged amino acid residue at the N-terminal position, such as Asp-Ala and Glu-Ala. Also displays specificity for Ala-Ala, Ala-Tyr and Tyr-Ala. This chain is Peptide transporter YePEPT, found in Yersinia enterocolitica subsp. palearctica serotype O:3 (strain YE-P4).